A 383-amino-acid polypeptide reads, in one-letter code: Probable cytosolic iron-sulfur protein assembly protein 1 (383 aa).

7 WD repeats span residues 10 to 49, 56 to 108, 135 to 175, 182 to 221, 228 to 275, 302 to 341, and 349 to 383; these read AHND…KFPL, THKR…VEYD, GHEN…EEFE, DHSQ…DEWS, GHEG…EDDE, VHKY…KWVI, and HGVH…LWKI.

It belongs to the WD repeat CIA1 family. As to quaternary structure, interacts with NAR1.

Its subcellular location is the cytoplasm. The protein localises to the nucleus. Its function is as follows. Essential component of the cytosolic iron-sulfur (Fe/S) protein assembly machinery. Required for the maturation of extramitochondrial Fe/S proteins. This chain is Probable cytosolic iron-sulfur protein assembly protein 1, found in Candida albicans (strain SC5314 / ATCC MYA-2876) (Yeast).